We begin with the raw amino-acid sequence, 509 residues long: ATP synthase subunit alpha (509 aa).

169 to 176 (GDRQTGKT) serves as a coordination point for ATP.

This sequence belongs to the ATPase alpha/beta chains family. As to quaternary structure, F-type ATPases have 2 components, CF(1) - the catalytic core - and CF(0) - the membrane proton channel. CF(1) has five subunits: alpha(3), beta(3), gamma(1), delta(1), epsilon(1). CF(0) has three main subunits: a(1), b(2) and c(9-12). The alpha and beta chains form an alternating ring which encloses part of the gamma chain. CF(1) is attached to CF(0) by a central stalk formed by the gamma and epsilon chains, while a peripheral stalk is formed by the delta and b chains.

The protein resides in the cell inner membrane. It catalyses the reaction ATP + H2O + 4 H(+)(in) = ADP + phosphate + 5 H(+)(out). In terms of biological role, produces ATP from ADP in the presence of a proton gradient across the membrane. The alpha chain is a regulatory subunit. The protein is ATP synthase subunit alpha of Brucella melitensis biotype 1 (strain ATCC 23456 / CCUG 17765 / NCTC 10094 / 16M).